The following is a 142-amino-acid chain: Large ribosomal subunit protein uL11 (142 aa).

This sequence belongs to the universal ribosomal protein uL11 family. In terms of assembly, part of the ribosomal stalk of the 50S ribosomal subunit. Interacts with L10 and the large rRNA to form the base of the stalk. L10 forms an elongated spine to which L12 dimers bind in a sequential fashion forming a multimeric L10(L12)X complex. Post-translationally, one or more lysine residues are methylated.

Its function is as follows. Forms part of the ribosomal stalk which helps the ribosome interact with GTP-bound translation factors. The sequence is that of Large ribosomal subunit protein uL11 from Shewanella baltica (strain OS223).